The sequence spans 380 residues: Cytochrome b (380 aa).

4 helical membrane passes run 34–54, 78–99, 114–134, and 179–199; these read FGSL…LLAM, WLIR…YLHI, WNTG…GYVL, and FFAL…IHLT. Histidine 84 and histidine 98 together coordinate heme b. Residues histidine 183 and histidine 197 each contribute to the heme b site. Histidine 202 serves as a coordination point for a ubiquinone. The next 4 helical transmembrane spans lie at 227–247, 289–309, 321–341, and 348–368; these read LKDA…ALFS, LGGV…PLLH, LSQL…WIGS, and FIII…ILFP.

The protein belongs to the cytochrome b family. As to quaternary structure, the cytochrome bc1 complex contains 11 subunits: 3 respiratory subunits (MT-CYB, CYC1 and UQCRFS1), 2 core proteins (UQCRC1 and UQCRC2) and 6 low-molecular weight proteins (UQCRH/QCR6, UQCRB/QCR7, UQCRQ/QCR8, UQCR10/QCR9, UQCR11/QCR10 and a cleavage product of UQCRFS1). This cytochrome bc1 complex then forms a dimer. Heme b is required as a cofactor.

The protein resides in the mitochondrion inner membrane. Functionally, component of the ubiquinol-cytochrome c reductase complex (complex III or cytochrome b-c1 complex) that is part of the mitochondrial respiratory chain. The b-c1 complex mediates electron transfer from ubiquinol to cytochrome c. Contributes to the generation of a proton gradient across the mitochondrial membrane that is then used for ATP synthesis. This is Cytochrome b (MT-CYB) from Oceanodroma tethys (Wedge-rumped storm-petrel).